The chain runs to 339 residues: UDP-galactose transporter homolog 1 (339 aa).

Transmembrane regions (helical) follow at residues 5-25, 43-63, 91-111, 138-158, 171-191, 208-228, 246-268, 273-295, and 301-321; these read ILKHVFAVGGIYCSFLTWGLL, VPYIVALVQATIAMICGLIYI, AISAPLAAYSLSYVDFLTYML, LVVLLVTVGITIFTLDGHKPS, SSLIGFVLLGSSLFLDGLTNA, HLMFALNFFLIVWNVIYMVLV, ISRYLLAYACCGAIGQCFIFYTL, SLVLVMVTVTRKMFSMILSIIVY, and LWQWVGIVIVFTGVVCESMGK.

This sequence belongs to the nucleotide-sugar transporter family. SLC35B subfamily.

The protein localises to the endoplasmic reticulum membrane. In terms of biological role, may be involved in specific transport of UDP-Gal from the cytosol to the Golgi lumen. Involved in the maintenance of optimal conditions for the folding of secretory pathway proteins in the endoplasmic reticulum. The protein is UDP-galactose transporter homolog 1 (HUT1) of Kluyveromyces lactis (strain ATCC 8585 / CBS 2359 / DSM 70799 / NBRC 1267 / NRRL Y-1140 / WM37) (Yeast).